Reading from the N-terminus, the 558-residue chain is Dihydroxy-acid dehydratase (558 aa).

Asp78 serves as a coordination point for Mg(2+). A [2Fe-2S] cluster-binding site is contributed by Cys119. Mg(2+) contacts are provided by Asp120 and Lys121. Lys121 carries the post-translational modification N6-carboxylysine. Cys192 is a [2Fe-2S] cluster binding site. Glu446 serves as a coordination point for Mg(2+). Residue Ser472 is the Proton acceptor of the active site.

This sequence belongs to the IlvD/Edd family. In terms of assembly, homodimer. [2Fe-2S] cluster serves as cofactor. Requires Mg(2+) as cofactor.

The catalysed reaction is (2R)-2,3-dihydroxy-3-methylbutanoate = 3-methyl-2-oxobutanoate + H2O. The enzyme catalyses (2R,3R)-2,3-dihydroxy-3-methylpentanoate = (S)-3-methyl-2-oxopentanoate + H2O. The protein operates within amino-acid biosynthesis; L-isoleucine biosynthesis; L-isoleucine from 2-oxobutanoate: step 3/4. It functions in the pathway amino-acid biosynthesis; L-valine biosynthesis; L-valine from pyruvate: step 3/4. In terms of biological role, functions in the biosynthesis of branched-chain amino acids. Catalyzes the dehydration of (2R,3R)-2,3-dihydroxy-3-methylpentanoate (2,3-dihydroxy-3-methylvalerate) into 2-oxo-3-methylpentanoate (2-oxo-3-methylvalerate) and of (2R)-2,3-dihydroxy-3-methylbutanoate (2,3-dihydroxyisovalerate) into 2-oxo-3-methylbutanoate (2-oxoisovalerate), the penultimate precursor to L-isoleucine and L-valine, respectively. The polypeptide is Dihydroxy-acid dehydratase (Campylobacter lari (strain RM2100 / D67 / ATCC BAA-1060)).